We begin with the raw amino-acid sequence, 634 residues long: Mediator of RNA polymerase II transcription subunit 17 (634 aa).

2 disordered regions span residues 51–73 and 606–626; these read DKHK…DVDT and DEKA…GSPG. The segment covering 611-623 has biased composition (polar residues); sequence RAQSWKPDSTTPG.

This sequence belongs to the Mediator complex subunit 17 family. Component of the Mediator complex.

Its subcellular location is the nucleus. Its function is as follows. Component of the Mediator complex, a coactivator involved in the regulated transcription of nearly all RNA polymerase II-dependent genes. Mediator functions as a bridge to convey information from gene-specific regulatory proteins to the basal RNA polymerase II transcription machinery. Mediator is recruited to promoters by direct interactions with regulatory proteins and serves as a scaffold for the assembly of a functional preinitiation complex with RNA polymerase II and the general transcription factors. This is Mediator of RNA polymerase II transcription subunit 17 (srb4) from Aspergillus terreus (strain NIH 2624 / FGSC A1156).